A 539-amino-acid chain; its full sequence is Chaperonin GroEL 1 (539 aa).

Residues Thr30 to Pro33, Lys51, Asp87 to Thr91, Gly415, Asn480 to Ala482, and Asp496 each bind ATP.

Belongs to the chaperonin (HSP60) family. In terms of assembly, forms a cylinder of 14 subunits composed of two heptameric rings stacked back-to-back. Interacts with the co-chaperonin GroES.

The protein localises to the cytoplasm. The catalysed reaction is ATP + H2O + a folded polypeptide = ADP + phosphate + an unfolded polypeptide.. Together with its co-chaperonin GroES, plays an essential role in assisting protein folding. The GroEL-GroES system forms a nano-cage that allows encapsulation of the non-native substrate proteins and provides a physical environment optimized to promote and accelerate protein folding. This chain is Chaperonin GroEL 1, found in Bradyrhizobium sp. (strain ORS 278).